A 292-amino-acid chain; its full sequence is Acetylglutamate kinase (292 aa).

Substrate-binding positions include 64–65, arginine 86, and asparagine 190; that span reads GG.

It belongs to the acetylglutamate kinase family. ArgB subfamily.

The protein localises to the cytoplasm. It carries out the reaction N-acetyl-L-glutamate + ATP = N-acetyl-L-glutamyl 5-phosphate + ADP. The protein operates within amino-acid biosynthesis; L-arginine biosynthesis; N(2)-acetyl-L-ornithine from L-glutamate: step 2/4. In terms of biological role, catalyzes the ATP-dependent phosphorylation of N-acetyl-L-glutamate. This Geobacter sulfurreducens (strain ATCC 51573 / DSM 12127 / PCA) protein is Acetylglutamate kinase.